The sequence spans 312 residues: tRNA-dihydrouridine(16) synthase (312 aa).

FMN-binding positions include 7-9 (PMQ) and glutamine 68. The Proton donor role is filled by cysteine 98. FMN contacts are provided by residues lysine 139, 200–202 (NGE), and 224–225 (GR).

This sequence belongs to the Dus family. DusC subfamily. The cofactor is FMN.

It catalyses the reaction 5,6-dihydrouridine(16) in tRNA + NADP(+) = uridine(16) in tRNA + NADPH + H(+). The enzyme catalyses 5,6-dihydrouridine(16) in tRNA + NAD(+) = uridine(16) in tRNA + NADH + H(+). Its function is as follows. Catalyzes the synthesis of 5,6-dihydrouridine (D), a modified base found in the D-loop of most tRNAs, via the reduction of the C5-C6 double bond in target uridines. Specifically modifies U16 in tRNAs. The chain is tRNA-dihydrouridine(16) synthase from Pasteurella multocida (strain Pm70).